We begin with the raw amino-acid sequence, 265 residues long: Mlc titration factor A (265 aa).

The Zn(2+) site is built by H111, H148, H152, and E211.

It belongs to the MtfA family. As to quaternary structure, interacts with Mlc. Zn(2+) serves as cofactor.

It is found in the cytoplasm. In terms of biological role, involved in the modulation of the activity of the glucose-phosphotransferase system (glucose-PTS). Interacts with the transcriptional repressor Mlc, preventing its interaction with DNA and leading to the modulation of expression of genes regulated by Mlc, including ptsG, which encodes the PTS system glucose-specific EIICB component. Shows zinc-dependent metallopeptidase activity. This Escherichia fergusonii protein is Mlc titration factor A.